A 317-amino-acid chain; its full sequence is Peroxidase 22.3 (317 aa).

The signal sequence occupies residues 1–25 (MASATNSSLSLMLLVAAAMASVASA). Gln-26 is modified (pyrrolidone carboxylic acid). 2 disulfide bridges follow: Cys-36–Cys-111 and Cys-69–Cys-74. Catalysis depends on His-67, which acts as the Proton acceptor. Positions 68, 71, 73, 75, and 77 each coordinate Ca(2+). N-linked (GlcNAc...) asparagine glycosylation occurs at Asn-112. 2 cysteine pairs are disulfide-bonded: Cys-117-Cys-312 and Cys-196-Cys-221. Pro-159 serves as a coordination point for substrate. Asn-171 carries N-linked (GlcNAc...) asparagine glycosylation. His-189 contacts heme b. Thr-190 contributes to the Ca(2+) binding site. Residue Asn-205 is glycosylated (N-linked (GlcNAc...) asparagine). Asp-236, Thr-239, and Asp-244 together coordinate Ca(2+).

This sequence belongs to the peroxidase family. Classical plant (class III) peroxidase subfamily. It depends on heme b as a cofactor. The cofactor is Ca(2+).

The protein resides in the secreted. It catalyses the reaction H2O2 + AH2 = A + 2 H2O. Functionally, removal of H(2)O(2), oxidation of toxic reductants, biosynthesis and degradation of lignin, suberization, auxin catabolism, response to environmental stresses such as wounding, pathogen attack and oxidative stress. These functions might be dependent on each isozyme/isoform in each plant tissue. This is Peroxidase 22.3 from Oryza sativa subsp. japonica (Rice).